We begin with the raw amino-acid sequence, 303 residues long: Glutamyl-Q tRNA(Asp) synthetase (303 aa).

L-glutamate is bound by residues 16–20 (RFAPS) and Glu52. The 'HIGH' region signature appears at 19–29 (PSPSGPLHFGS). Zn(2+)-binding residues include Cys108, Cys110, Tyr122, and Cys126. 2 residues coordinate L-glutamate: Tyr177 and Arg195. The 'KMSKS' region signature appears at 233–237 (KLSKQ). Lys236 lines the ATP pocket.

It belongs to the class-I aminoacyl-tRNA synthetase family. GluQ subfamily. Zn(2+) serves as cofactor.

Catalyzes the tRNA-independent activation of glutamate in presence of ATP and the subsequent transfer of glutamate onto a tRNA(Asp). Glutamate is transferred on the 2-amino-5-(4,5-dihydroxy-2-cyclopenten-1-yl) moiety of the queuosine in the wobble position of the QUC anticodon. The protein is Glutamyl-Q tRNA(Asp) synthetase of Vibrio vulnificus (strain CMCP6).